Consider the following 341-residue polypeptide: Tryptophan--tRNA ligase (341 aa).

ATP is bound by residues 11-13 (RPT) and 19-20 (GH). A 'HIGH' region motif is present at residues 12-20 (PTGKLHIGH). Aspartate 140 is an L-tryptophan binding site. Residues 152–154 (GTD), leucine 194, and 202–206 (KMSKS) each bind ATP. Positions 202-206 (KMSKS) match the 'KMSKS' region motif.

It belongs to the class-I aminoacyl-tRNA synthetase family. Homodimer.

It is found in the cytoplasm. It catalyses the reaction tRNA(Trp) + L-tryptophan + ATP = L-tryptophyl-tRNA(Trp) + AMP + diphosphate + H(+). In terms of biological role, catalyzes the attachment of tryptophan to tRNA(Trp). The protein is Tryptophan--tRNA ligase of Streptococcus pneumoniae serotype 4 (strain ATCC BAA-334 / TIGR4).